Consider the following 175-residue polypeptide: Large ribosomal subunit protein bL17 (175 aa).

Residues 127–175 (GEAEAATKRAVKEDALKKDEAPAAESVEDAKPAEDAPAAEAADDKGKDA) form a disordered region. Positions 131-147 (AATKRAVKEDALKKDEA) are enriched in basic and acidic residues.

It belongs to the bacterial ribosomal protein bL17 family. In terms of assembly, part of the 50S ribosomal subunit. Contacts protein L32.

The protein is Large ribosomal subunit protein bL17 of Streptomyces griseus subsp. griseus (strain JCM 4626 / CBS 651.72 / NBRC 13350 / KCC S-0626 / ISP 5235).